The primary structure comprises 427 residues: Serine--tRNA ligase (427 aa).

231–233 provides a ligand contact to L-serine; sequence TAE. ATP is bound at residue 262 to 264; that stretch reads RSE. Residue glutamate 285 coordinates L-serine. 349-352 provides a ligand contact to ATP; that stretch reads EISS. An L-serine-binding site is contributed by serine 385.

Belongs to the class-II aminoacyl-tRNA synthetase family. Type-1 seryl-tRNA synthetase subfamily. Homodimer. The tRNA molecule binds across the dimer.

It is found in the cytoplasm. The enzyme catalyses tRNA(Ser) + L-serine + ATP = L-seryl-tRNA(Ser) + AMP + diphosphate + H(+). It catalyses the reaction tRNA(Sec) + L-serine + ATP = L-seryl-tRNA(Sec) + AMP + diphosphate + H(+). Its pathway is aminoacyl-tRNA biosynthesis; selenocysteinyl-tRNA(Sec) biosynthesis; L-seryl-tRNA(Sec) from L-serine and tRNA(Sec): step 1/1. Functionally, catalyzes the attachment of serine to tRNA(Ser). Is also able to aminoacylate tRNA(Sec) with serine, to form the misacylated tRNA L-seryl-tRNA(Sec), which will be further converted into selenocysteinyl-tRNA(Sec). This is Serine--tRNA ligase from Allorhizobium ampelinum (strain ATCC BAA-846 / DSM 112012 / S4) (Agrobacterium vitis (strain S4)).